The following is a 108-amino-acid chain: Insulin (108 aa).

A signal peptide spans Met-1–Ala-21. Intrachain disulfides connect Cys-30-Cys-94, Cys-42-Cys-107, and Cys-93-Cys-98. Residues Asp-54–Arg-85 constitute a propeptide, c peptide.

The protein belongs to the insulin family. In terms of assembly, heterodimer of a B chain and an A chain linked by two disulfide bonds.

It is found in the secreted. Its function is as follows. Insulin decreases blood glucose concentration. It increases cell permeability to monosaccharides, amino acids and fatty acids. It accelerates glycolysis, the pentose phosphate cycle, and glycogen synthesis in liver. This Cyprinus carpio (Common carp) protein is Insulin (ins).